The primary structure comprises 372 residues: Chaperone protein DnaJ (372 aa).

Residues 5 to 69 (DYYEVLGVSK…DKRKQYDQFG (65 aa)) enclose the J domain. Residues 139-221 (GVDKIIELDL…CKGKGKYLER (83 aa)) form a CR-type zinc finger. Residues Cys-152, Cys-155, Cys-169, Cys-172, Cys-195, Cys-198, Cys-209, and Cys-212 each contribute to the Zn(2+) site. CXXCXGXG motif repeat units lie at residues 152 to 159 (CSVCFGSG), 169 to 176 (CNNCHGTG), 195 to 202 (CNVCNGAG), and 209 to 216 (CKNCKGKG).

This sequence belongs to the DnaJ family. As to quaternary structure, homodimer. Zn(2+) serves as cofactor.

It localises to the cytoplasm. Functionally, participates actively in the response to hyperosmotic and heat shock by preventing the aggregation of stress-denatured proteins and by disaggregating proteins, also in an autonomous, DnaK-independent fashion. Unfolded proteins bind initially to DnaJ; upon interaction with the DnaJ-bound protein, DnaK hydrolyzes its bound ATP, resulting in the formation of a stable complex. GrpE releases ADP from DnaK; ATP binding to DnaK triggers the release of the substrate protein, thus completing the reaction cycle. Several rounds of ATP-dependent interactions between DnaJ, DnaK and GrpE are required for fully efficient folding. Also involved, together with DnaK and GrpE, in the DNA replication of plasmids through activation of initiation proteins. The protein is Chaperone protein DnaJ of Mycoplasma mycoides subsp. mycoides SC (strain CCUG 32753 / NCTC 10114 / PG1).